A 428-amino-acid polypeptide reads, in one-letter code: Cell division cycle 20.6, cofactor of APC complex (428 aa).

7 WD repeats span residues 106-145 (WFLT…TSKL), 150-189 (DENG…HVRT), 193-230 (GHES…SIIG), 234-273 (GHTE…SNPT), 282-324 (EHTA…CLNS), 326-367 (ETGS…KMAE), and 370-409 (GHTS…PKTT).

Belongs to the WD repeat CDC20/Fizzy family. In terms of assembly, the APC/C is composed of at least 11 subunits that stay tightly associated throughout the cell cycle.

The protein resides in the nucleus. Its pathway is protein modification; protein ubiquitination. Its function is as follows. Component of the anaphase promoting complex/cyclosome (APC/C), a cell cycle-regulated E3 ubiquitin-protein ligase complex that controls progression through mitosis and the G1 phase of the cell cycle. The chain is Cell division cycle 20.6, cofactor of APC complex (CDC20-6) from Arabidopsis thaliana (Mouse-ear cress).